We begin with the raw amino-acid sequence, 1530 residues long: Brefeldin A resistance protein (1530 aa).

Positions 1-26 (MNQNSDTTHGQALGSTLNHTTEVTRI) are enriched in polar residues. The disordered stretch occupies residues 1–100 (MNQNSDTTHG…SDDSSVDRLA (100 aa)). Asn-28 is a glycosylation site (N-linked (GlcNAc...) asparagine). The segment covering 36–48 (SSSNVDESLDSSN) has biased composition (low complexity). Positions 54–64 (KASHTNEEYRS) are enriched in basic and acidic residues. Asn-67 carries an N-linked (GlcNAc...) asparagine glycan. A compositionally biased stretch (low complexity) spans 72 to 93 (PSSSNEPSPESSSNSDSSSSDD). Positions 153–410 (KTFPDIFLQP…FLDMGFDCHP (258 aa)) constitute an ABC transporter 1 domain. 3 N-linked (GlcNAc...) asparagine glycosylation sites follow: Asn-273, Asn-334, and Asn-450. A phosphoserine mark is found at Ser-486 and Ser-489. Thr-491 is modified (phosphothreonine). The next 6 helical transmembrane spans lie at 539–559 (AYIG…GSIF), 575–595 (VLFF…ANMF), 620–640 (LIVD…VLYF), 649–669 (GGFW…SAFF), 684–704 (ALGG…IPNI), and 791–811 (LAII…ASET). Residues 843 to 864 (PLDLETGQDTQGGDVVKESPDN) form a disordered region. Residues 882 to 1125 (FSWRNLNYDI…LLNYFESHGA (244 aa)) form the ABC transporter 2 domain. 918-925 (GESGAGKT) provides a ligand contact to ATP. Residues Asn-1159 and Asn-1175 are each glycosylated (N-linked (GlcNAc...) asparagine). Position 1186 is a phosphothreonine (Thr-1186). 6 consecutive transmembrane segments (helical) span residues 1220–1240 (ILMS…FTFY), 1255–1275 (AVFM…PKFI), 1300–1320 (AIIV…LCWF), 1338–1358 (YAWL…QAVA), 1367–1387 (ASVV…VLQP), and 1392–1412 (VGFW…EGLL). 2 N-linked (GlcNAc...) asparagine glycosylation sites follow: Asn-1449 and Asn-1460. A helical transmembrane segment spans residues 1492 to 1512 (GIFVGYVFFNIFAVLLLFYVF).

It belongs to the ABC transporter superfamily. ABCG family. PDR (TC 3.A.1.205) subfamily.

The protein resides in the membrane. Functionally, confers hyper-resistance to brefeldin A (BFA), an inhibitor of intracellular protein transport. Could serve as an efflux pump of various antibiotics. In Schizosaccharomyces pombe (strain 972 / ATCC 24843) (Fission yeast), this protein is Brefeldin A resistance protein (bfr1).